The sequence spans 245 residues: Pre-hexon-linking protein VIII (245 aa).

The propeptide occupies 116–167 (LMVGRTEGRMQLAGGLTEGRVQLSGGFHGRPLVRGRSRRPPRWCGAELTGNG).

It belongs to the adenoviridae hexon-linking protein family. In terms of assembly, interacts with the peripentonal hexons as well as the hexons in the facets. Part of a complex composed of the core-capsid bridging protein, the endosome lysis protein VI and the hexon-linking protein VIII; these interactions bridge the virus core to the capsid. Post-translationally, cleaved by the viral protease during virion maturation. May cause the middle segment to be shed from the capsid.

It localises to the virion. It is found in the host nucleus. In terms of biological role, structural component of the virion that acts as a cement protein on the capsid interior and which glue the peripentonal hexons and group-of-nine hexons together. This Galliformes (FAdV-1) protein is Pre-hexon-linking protein VIII.